The primary structure comprises 229 residues: MDIIKLNATRREDSGKSASSRLRRAGQIPAIAYGRELAPQSVAISPKALLQVLGSDHGKNSVVELAIENGQTLTVMVRDYDYHPISRELVHADFIQVKLDQPVDVQIPFRCVGKPKGVVTGGVLQQIFRTIPVRCLPEKIPSFIEIDVTELDLGDSYKASGLKLPEGVKTLLADDQTIAVVNAPEKAGPEEEAKPAAGAPAAGAAAAPAAGAAAPAKGAAPAADKKDKK.

Disordered regions lie at residues 1 to 21 (MDII…ASSR) and 182 to 229 (NAPE…KDKK). A compositionally biased stretch (low complexity) spans 195–222 (PAAGAPAAGAAAAPAAGAAAPAKGAAPA).

The protein belongs to the bacterial ribosomal protein bL25 family. CTC subfamily. Part of the 50S ribosomal subunit; part of the 5S rRNA/L5/L18/L25 subcomplex. Contacts the 5S rRNA. Binds to the 5S rRNA independently of L5 and L18.

Functionally, this is one of the proteins that binds to the 5S RNA in the ribosome where it forms part of the central protuberance. This chain is Large ribosomal subunit protein bL25, found in Sorangium cellulosum (strain So ce56) (Polyangium cellulosum (strain So ce56)).